Consider the following 184-residue polypeptide: ADP-ribosylation factor-like protein 8b (184 aa).

The note=Mediates targeting to membranes intramembrane region spans 1–18 (MGLWDALLNWLRSLFFKQ). GTP-binding positions include 29-34 (NAGKTS), 48-51 (MIPT), 70-74 (DLGGQ), and 129-132 (NKID).

The protein belongs to the small GTPase superfamily. Arf family. Interacts with tubulin.

The protein resides in the late endosome membrane. The protein localises to the lysosome membrane. Its subcellular location is the cytoplasm. It is found in the cytoskeleton. It localises to the spindle. May play a role in lysosome motility. May play a role in chromosome segregation. Its function is as follows. (Microbial infection) Component of tomato mosaic virus (ToMV) RNA replication complexes. Required for tobamovirus multiplication, especially for efficient negative-strand RNA synthesis and viral RNA capping. The chain is ADP-ribosylation factor-like protein 8b from Arabidopsis thaliana (Mouse-ear cress).